We begin with the raw amino-acid sequence, 185 residues long: Ribosome-recycling factor (185 aa).

This sequence belongs to the RRF family.

It is found in the cytoplasm. In terms of biological role, responsible for the release of ribosomes from messenger RNA at the termination of protein biosynthesis. May increase the efficiency of translation by recycling ribosomes from one round of translation to another. In Xylella fastidiosa (strain 9a5c), this protein is Ribosome-recycling factor.